The primary structure comprises 148 residues: Ergosterol biosynthetic protein 28 (148 aa).

The Cytoplasmic portion of the chain corresponds to 1–25 (MFSLQDVITTTKTTLAAMPKGYLPK). A helical membrane pass occupies residues 26–46 (WLLFISIVSVFNSIQTYVSGL). Residues 47-92 (ELTRKVYERKPTETTHLSARTFGTWTFISCVIRFYGAMYLNEPHIF) lie on the Lumenal side of the membrane. The helical transmembrane segment at 93-113 (ELVFMSYMVALFHFGSELLIF) threads the bilayer. Over 114–120 (RTCKLGK) the chain is Cytoplasmic. The chain crosses the membrane as a helical span at residues 121–136 (GFMGPLVVSTTSLVWM). Topologically, residues 137-148 (YKQREYYTGVAW) are lumenal.

The protein belongs to the ERG28 family. In terms of assembly, heterotetramer of ERG25, ERG26, ERG27 and ERG28. ERG28 acts as a scaffold to tether ERG27 and other 4,4-demethylation-related enzymes, forming a demethylation enzyme complex, in the endoplasmic reticulum. Interacts with ERG25, ERG26 and ERG27. Also interacts with ERG1, ERG3, ERG5, ERG6 and ERG11.

Its subcellular location is the endoplasmic reticulum membrane. Functionally, part of the third module of ergosterol biosynthesis pathway that includes the late steps of the pathway. ERG28 has a role as a scaffold to help anchor the catalytic components of the C-4 demethylation complex ERG25, ERG26 and ERG27 to the endoplasmic reticulum. The third module or late pathway involves the ergosterol synthesis itself through consecutive reactions that mainly occur in the endoplasmic reticulum (ER) membrane. Firstly, the squalene synthase ERG9 catalyzes the condensation of 2 farnesyl pyrophosphate moieties to form squalene, which is the precursor of all steroids. Squalene synthase is crucial for balancing the incorporation of farnesyl diphosphate (FPP) into sterol and nonsterol isoprene synthesis. Secondly, the squalene epoxidase ERG1 catalyzes the stereospecific oxidation of squalene to (S)-2,3-epoxysqualene, which is considered to be a rate-limiting enzyme in steroid biosynthesis. Then, the lanosterol synthase ERG7 catalyzes the cyclization of (S)-2,3 oxidosqualene to lanosterol, a reaction that forms the sterol core. In the next steps, lanosterol is transformed to zymosterol through a complex process involving various demethylation, reduction and desaturation reactions. The lanosterol 14-alpha-demethylase ERG11 (also known as CYP51) catalyzes C14-demethylation of lanosterol to produce 4,4'-dimethyl cholesta-8,14,24-triene-3-beta-ol, which is critical for ergosterol biosynthesis. The C-14 reductase ERG24 reduces the C14=C15 double bond of 4,4-dimethyl-cholesta-8,14,24-trienol to produce 4,4-dimethyl-cholesta-8,24-dienol. 4,4-dimethyl-cholesta-8,24-dienol is substrate of the C-4 demethylation complex ERG25-ERG26-ERG27 in which ERG25 catalyzes the three-step monooxygenation required for the demethylation of 4,4-dimethyl and 4alpha-methylsterols, ERG26 catalyzes the oxidative decarboxylation that results in a reduction of the 3-beta-hydroxy group at the C-3 carbon to an oxo group, and ERG27 is responsible for the reduction of the keto group on the C-3. ERG28 has a role as a scaffold to help anchor ERG25, ERG26 and ERG27 to the endoplasmic reticulum and ERG29 regulates the activity of the iron-containing C4-methylsterol oxidase ERG25. Then, the sterol 24-C-methyltransferase ERG6 catalyzes the methyl transfer from S-adenosyl-methionine to the C-24 of zymosterol to form fecosterol. The C-8 sterol isomerase ERG2 catalyzes the reaction which results in unsaturation at C-7 in the B ring of sterols and thus converts fecosterol to episterol. The sterol-C5-desaturase ERG3 then catalyzes the introduction of a C-5 double bond in the B ring to produce 5-dehydroepisterol. The C-22 sterol desaturase ERG5 further converts 5-dehydroepisterol into ergosta-5,7,22,24(28)-tetraen-3beta-ol by forming the C-22(23) double bond in the sterol side chain. Finally, ergosta-5,7,22,24(28)-tetraen-3beta-ol is substrate of the C-24(28) sterol reductase ERG4 to produce ergosterol. The chain is Ergosterol biosynthetic protein 28 from Saccharomyces cerevisiae (strain ATCC 204508 / S288c) (Baker's yeast).